Reading from the N-terminus, the 551-residue chain is L-lactate permease (551 aa).

12 helical membrane passes run 13-33 (NIWLSSLIASLPILFFFFALI), 37-57 (LKGYVAASWTVAIALAVALLF), 70-90 (VYGFFYGLWPIAWIIIAAVFV), 131-151 (GAAGFGAPVAITAALLVGLGF), 159-179 (LCLIVNTAPVAFGAMGIPILV), 194-214 (MVGRQLPFMTIIVLFWIMAIM), 244-264 (FIGPELPDIISSLVSLLCLTL), 366-386 (FDWFSATGTAILFAALLSIVW), 405-425 (LALPIYSIGMVLAFAFISNYS), 438-458 (TGHAFTFFSPFLGWLGVFLTG), 494-514 (VTGKMISPQSIAIACAAVGLV), and 530-550 (IFTCMVGVITTLQAYVLTWMI).

This sequence belongs to the lactate permease family.

Its subcellular location is the cell inner membrane. The enzyme catalyses (S)-lactate(in) + H(+)(in) = (S)-lactate(out) + H(+)(out). It catalyses the reaction (R)-lactate(in) + H(+)(in) = (R)-lactate(out) + H(+)(out). The catalysed reaction is glycolate(in) + H(+)(in) = glycolate(out) + H(+)(out). Functionally, uptake of L-lactate across the membrane. Can also transport D-lactate and glycolate. Seems to be driven by a proton motive force. This is L-lactate permease (lldP) from Escherichia coli O6:H1 (strain CFT073 / ATCC 700928 / UPEC).